A 176-amino-acid polypeptide reads, in one-letter code: NAD(P)H-quinone oxidoreductase subunit I, chloroplastic (176 aa).

2 4Fe-4S ferredoxin-type domains span residues glycine 55–glutamate 84 and leucine 95–glutamate 124. Positions 64, 67, 70, 74, 104, 107, 110, and 114 each coordinate [4Fe-4S] cluster.

The protein belongs to the complex I 23 kDa subunit family. NDH is composed of at least 16 different subunits, 5 of which are encoded in the nucleus. Requires [4Fe-4S] cluster as cofactor.

Its subcellular location is the plastid. The protein resides in the chloroplast thylakoid membrane. The enzyme catalyses a plastoquinone + NADH + (n+1) H(+)(in) = a plastoquinol + NAD(+) + n H(+)(out). It catalyses the reaction a plastoquinone + NADPH + (n+1) H(+)(in) = a plastoquinol + NADP(+) + n H(+)(out). NDH shuttles electrons from NAD(P)H:plastoquinone, via FMN and iron-sulfur (Fe-S) centers, to quinones in the photosynthetic chain and possibly in a chloroplast respiratory chain. The immediate electron acceptor for the enzyme in this species is believed to be plastoquinone. Couples the redox reaction to proton translocation, and thus conserves the redox energy in a proton gradient. This Populus trichocarpa (Western balsam poplar) protein is NAD(P)H-quinone oxidoreductase subunit I, chloroplastic.